Consider the following 107-residue polypeptide: MTYLFYTAAALAEIAGCFSVWAWWRLERSPLWLAPGFVSLLLFAWLLALVDTNAAGRAYAAYGGIYIAASLAWLWLVEGVRPDRWDLAGAALCIAGASLILLAPRGA.

4 consecutive transmembrane segments (helical) span residues 4–24 (LFYTAAALAEIAGCFSVWAWW), 30–50 (PLWLAPGFVSLLLFAWLLALV), 60–80 (AAYGGIYIAASLAWLWLVEGV), and 87–107 (LAGAALCIAGASLILLAPRGA).

It belongs to the UPF0060 family.

It localises to the cell inner membrane. The chain is UPF0060 membrane protein mll7841 from Mesorhizobium japonicum (strain LMG 29417 / CECT 9101 / MAFF 303099) (Mesorhizobium loti (strain MAFF 303099)).